Here is a 1898-residue protein sequence, read N- to C-terminus: MTPEPAPGRTMVPLVPALVMLGLVAGAHGDSKPVFVKVPEDQTGLSGGVASFVCQATGEPKPRITWMKKGKKVSSQRFEVIEFDDGAGSVLRIQPLRVQRDEAIYECTATNSLGEINTSAKLSVLEEEQLPLGFPSIDMGPQLKVVEKARTATMLCAAGGNPDPEISWFKDFLPVDPAASNGRIKQLRSGALQIESSEESDQGKYECVATNSAGTRYSAPANLYVRVRRVAPRFSIPPSSQEVMPGGSVNLTCVAVGAPMPYVKWMMGAEELTKEDEMPVGRNVLELSNVVRSANYTCVAISSLGMIEATAQVTVKALPKPPIDLVVTETTATSVTLTWDSGNSEPVSYYGIQYRPAGAEGPFQEVDGVATTRYSIGGLSPFSEYAFRVLAVNSIGRGPPSEAVRARTGEQAPSSPPRRVQARMLSASTMLVQWEPPEEPNGLVRGYRVYYTPDSRRPLSAWHKHNTDAGLLTTVGSLLPGITYSLRVLAFTAVGDGPPSPTIQVKTQQGVPAQPADFQAEVDSDTRIQLSWLLPPQERIVKYELVYWAAEDEGQQHKVTFDPTSSYTVEDLKPDTLYRFQLAARSELGVGVFTPTIEARTAQSTPSAPPQKVTCVSVGSTTVRVSWVPPPADSRNGVITQYSVAYEAVDGEDRGRHVVDGIGREHSSWDLVGLEKWTEYRVWVRAHTDVGPGPESSPVLVRTDEDVPSGPPRKVEVEPLNSTAVRVSWKLPVPSKQHGQIRGYQVTYVRLENGEPRGAPIIQDVMLAEAQETTISGLTPETTYSITVAAYTTKGDGARSKPKIVTTTGAVPGRPTMMVSTTAMNTALLQWHPPKELPGELLGYRLQYRRADEARPSTIDFGKDDQHFTVTGLHKGATYIFRLTAKNRAGLGEEFEKEITTPEDVPSGFPQNLRVIGLTTSTTELIWDPPVLAERNGRITNYTVVYRDINSQQELQNVTADTHLTLSGLKPDTTYDIKVRARTSKGAGPLSPSIQSRTMPVEQVFAKNFRVEAAMKTSVLLSWEVPDSYKSAVPFRILYNGQSVEVDGHSMRKLIADLQPNTEYSFVLMNRGSSAGGLQHLVSIRTAPDLLPHKPLPASAYIEDGRFTLTMPRVQEPALVRWFYIMVVPIDRMGGSMLAPQWSTPEELELDELLEAIEQGGGERLRRRRQTERLKPYVAAQVDVLPETFTLGDKKNYQGFYNRPLSPDLSYQCFVLASLKEPVDQKRYACSPYSDEIVVQVTPAQQQEEPELLWVTGPVLAVILIVLIVIAILLFKRKRTHSPSSKDEQSIGLKDSLLAHSSDPVEMRRLNYQTPGMRDHPPIPITDLADNIERLKANDGLKFSQEYESIDPGQQFTWENSNLEVNKPKNRYANVIAYDHSRVILTSIDGVPGSDYINANYIDGYRKQNAYIATQGPLPETMGDFWRMVWEQRTATVVMMTRLEEKSRVKCDQYWPARGTETYGLIQVTLLDTVELATYTVRTFALYKSGSSEKRELRQFQFMAWPDHGVPEYPTPILAFLRRVKACNPLDAGPMVVHCSAGVGRTGCFIVIDAMLERMKHEKTVDIYGHVTCMRAQRNYMVQTEDQYVFIHEALLEAAMCGHTEVPARNLYAHIQKLGQVPPGESVTAMELEFKLLANSKAHTSRFISANLPCNKFKNRLVNIMPYELTRVCLQPIRGVEGSDYINASFLDGYRQQKAYIATQGPLAESTEDFWRMLWEHNSTIIVMLTRLREMGREKCHQYWPAERSARYQYFVVDPMAEYNMPQYILREFKVTDARDGQSRTIRQFQFTDWPEQGVPKTGEGFIDFIGQVHKTKEQFGQDGPITVHCSAGVGRTGVFITLSIVLERMRYEGVVDMFQTVKTLRTQRPAMVQTEDQYQLCYRAALEYLGSFDHYAT.

The first 29 residues, 1 to 29, serve as a signal peptide directing secretion; sequence MTPEPAPGRTMVPLVPALVMLGLVAGAHG. At 30–1254 the chain is on the extracellular side; it reads DSKPVFVKVP…QQQEEPELLW (1225 aa). 3 Ig-like C2-type domains span residues 33 to 123, 135 to 224, and 232 to 314; these read PVFV…AKLS, PSID…ANLY, and PRFS…AQVT. A disulfide bond links Cys-54 and Cys-107. 68–77 is a binding site for heparin; the sequence is KKGKKVSSQR. An N-linked (GlcNAc...) asparagine glycan is attached at Asn-117. Cysteines 156 and 207 form a disulfide. N-linked (GlcNAc...) asparagine glycans are attached at residues Asn-250 and Asn-295. A disulfide bridge connects residues Cys-253 and Cys-298. Fibronectin type-III domains lie at 321–411, 416–510, 514–604, 609–706, 711–810, 811–905, 909–1001, and 1005–1089; these read PPID…TGEQ, PPRR…TQQG, QPAD…TAQS, PPQK…TDED, PPRK…TTGA, VPGR…PEDV, FPQN…TMPV, and FAKN…TAPD. Residues 399–418 form a disordered region; the sequence is PPSEAVRARTGEQAPSSPPR. The tract at residues 693–713 is disordered; it reads GPESSPVLVRTDEDVPSGPPR. N-linked (GlcNAc...) asparagine glycosylation is present at Asn-721. 2 N-linked (GlcNAc...) asparagine glycosylation sites follow: Asn-941 and Asn-957. Residues 1255-1275 traverse the membrane as a helical segment; that stretch reads VTGPVLAVILIVLIVIAILLF. Over 1276-1898 the chain is Cytoplasmic; that stretch reads KRKRTHSPSS…YLGSFDHYAT (623 aa). Phosphoserine is present on Ser-1296. Tyrosine-protein phosphatase domains are found at residues 1343-1598 and 1630-1889; these read FSQE…LLEA and MELE…ALEY. Residues Asp-1507, 1539–1545, and Gln-1583 each bind substrate; that span reads CSAGVGR. The active-site Phosphocysteine intermediate is the Cys-1539. The Phosphocysteine intermediate role is filled by Cys-1830.

This sequence belongs to the protein-tyrosine phosphatase family. Receptor class 2A subfamily. In terms of assembly, interacts with GRIP1. Interacts with PPFIA1, PPFIA2 and PPFIA3. Interacts with INSR.

The protein resides in the membrane. It carries out the reaction O-phospho-L-tyrosyl-[protein] + H2O = L-tyrosyl-[protein] + phosphate. Possible cell adhesion receptor. It possesses an intrinsic protein tyrosine phosphatase activity (PTPase) and dephosphorylates EPHA2 regulating its activity. In terms of biological role, the first PTPase domain has enzymatic activity, while the second one seems to affect the substrate specificity of the first one. In Bos taurus (Bovine), this protein is Receptor-type tyrosine-protein phosphatase F (PTPRF).